We begin with the raw amino-acid sequence, 830 residues long: Formin-like protein 14 (830 aa).

An N-terminal signal peptide occupies residues 1 to 34 (MAMAMAMPSSSPPLFFSLLNLMLLLLLLAPYCSA). Residues 40-59 (NNTHHRSSSPTQTTLQQLHS) are compositionally biased toward polar residues. Positions 40 to 195 (NNTHHRSSSP…NISTLVHPTQ (156 aa)) are disordered. Composition is skewed to pro residues over residues 61–86 (DSPP…PAPR) and 95–135 (PPPP…PTPK). Low complexity predominate over residues 149–160 (YPFTNYPFFPNF). Residues 203–223 (VLQALLLSFLSLCLLLLSALL) form a helical membrane-spanning segment. Positions 235–446 (HHSHSHPNAR…LHSDKLKPGS (212 aa)) are disordered. A compositionally biased stretch (pro residues) spans 314 to 323 (RPLPPLPRVG). The segment covering 324–369 (PPSGEFASRSSASDPSTAPPAAAEASSSSLSPSSPSASSPTLGSSP) has biased composition (low complexity). The region spanning 390 to 823 (PKRRPQPPEP…MMGRDWNMAA (434 aa)) is the FH2 domain. The segment covering 424-446 (HSPSEKSMRKSRPLHSDKLKPGS) has biased composition (basic and acidic residues).

The protein belongs to the formin-like family. Class-I subfamily.

It localises to the membrane. In Oryza sativa subsp. japonica (Rice), this protein is Formin-like protein 14 (FH14).